The chain runs to 131 residues: Peptide methionine sulfoxide reductase MsrB (131 aa).

In terms of domain architecture, MsrB spans 8-130 (LEEWKEMLDP…NSVCLDLVPR (123 aa)). Residues cysteine 47, cysteine 50, cysteine 96, and cysteine 99 each contribute to the Zn(2+) site. Catalysis depends on cysteine 119, which acts as the Nucleophile.

The protein belongs to the MsrB Met sulfoxide reductase family. It depends on Zn(2+) as a cofactor.

It carries out the reaction L-methionyl-[protein] + [thioredoxin]-disulfide + H2O = L-methionyl-(R)-S-oxide-[protein] + [thioredoxin]-dithiol. This chain is Peptide methionine sulfoxide reductase MsrB, found in Pseudomonas savastanoi pv. phaseolicola (strain 1448A / Race 6) (Pseudomonas syringae pv. phaseolicola (strain 1448A / Race 6)).